Consider the following 268-residue polypeptide: MRLIPLSTAQQVGKWSANYIVEKINAFAPSADRPFVLGLPTGGTPLATYKALIELHRAGKVSFQHVVTFNMDEYVGIPADHPQSYRTFMYENFFNHIDIKDENINLLNGNATDPQAECARYEAKIKSYGKINLFMGGVGNDGHIAFNEPASSLASRTRMKTLTEDTRLANSRFFDNDINKVPKYALTVGVGTLLDAEELMILATGINKAQAVQVATEGAVNHLWTISCVQLHPKAILVCDDPATMELRVKTLRYFQQIEAQERQQYQD.

Asp72 (proton acceptor; for enolization step) is an active-site residue. The active-site For ring-opening step is Asp141. His143 acts as the Proton acceptor; for ring-opening step in catalysis. The active-site For ring-opening step is the Glu148.

This sequence belongs to the glucosamine/galactosamine-6-phosphate isomerase family. NagB subfamily. In terms of assembly, homohexamer.

It catalyses the reaction alpha-D-glucosamine 6-phosphate + H2O = beta-D-fructose 6-phosphate + NH4(+). Its pathway is amino-sugar metabolism; N-acetylneuraminate degradation; D-fructose 6-phosphate from N-acetylneuraminate: step 5/5. Allosterically activated by N-acetylglucosamine 6-phosphate (GlcNAc6P). Catalyzes the reversible isomerization-deamination of glucosamine 6-phosphate (GlcN6P) to form fructose 6-phosphate (Fru6P) and ammonium ion. This chain is Glucosamine-6-phosphate deaminase, found in Proteus mirabilis (strain HI4320).